A 144-amino-acid polypeptide reads, in one-letter code: Protein BUD31 homolog (144 aa).

Residues 2–10 (PKVRRSRKP) carry the Nuclear localization signal motif.

It belongs to the BUD31 (G10) family.

Its subcellular location is the nucleus. This chain is Protein BUD31 homolog, found in Branchiostoma belcheri (Amphioxus).